Reading from the N-terminus, the 146-residue chain is Hemoglobin subunit theta (146 aa).

Residues 2–146 (HFTAEEKSVI…VATALAHKYH (145 aa)) enclose the Globin domain. Heme b-binding residues include H63 and H92.

This sequence belongs to the globin family.

The sequence is that of Hemoglobin subunit theta from Sus scrofa (Pig).